We begin with the raw amino-acid sequence, 583 residues long: Ankyrin repeat and SOCS box protein 15 (583 aa).

11 ANK repeats span residues 75–104 (KGWF…KTLW), 110–139 (DGET…WPNT), 143–172 (KGET…SLDQ), 176–205 (KRWS…NVHL), 209–238 (FGVT…DVFA), 242–271 (DGAS…SGNV), 275–304 (AGHL…KHAI), 307–336 (SGLT…DVNA), 349–378 (ERKT…DPNL), 379–408 (DPLN…NVNC), and 416–444 (TRFP…QVEL). An SOCS box domain is found at 524-579 (WPEIRQIIENPCSLKHLCRLKIRRVMGLQRLCQPASIQMLPLPAAMRRYLLFKEFD).

The protein belongs to the ankyrin SOCS box (ASB) family.

It participates in protein modification; protein ubiquitination. In terms of biological role, may be a substrate-recognition component of a SCF-like ECS (Elongin-Cullin-SOCS-box protein) E3 ubiquitin-protein ligase complex which mediates the ubiquitination and subsequent proteasomal degradation of target proteins. The chain is Ankyrin repeat and SOCS box protein 15 (Asb15) from Mus musculus (Mouse).